Here is a 428-residue protein sequence, read N- to C-terminus: D-amino acid dehydrogenase (428 aa).

3–17 (VVILGSGVVGVASAY) contributes to the FAD binding site.

It belongs to the DadA oxidoreductase family. It depends on FAD as a cofactor.

It carries out the reaction a D-alpha-amino acid + A + H2O = a 2-oxocarboxylate + AH2 + NH4(+). It participates in amino-acid degradation; D-alanine degradation; NH(3) and pyruvate from D-alanine: step 1/1. In terms of biological role, oxidative deamination of D-amino acids. The protein is D-amino acid dehydrogenase of Burkholderia multivorans (strain ATCC 17616 / 249).